A 353-amino-acid chain; its full sequence is MVREKVTVSTRTLQWKCVESKADNKRLYYGRFILSPLMKGQADTIGISMRRALLGEIEGTCITRAKSEKIPHEYSTLVGIQESVHDILMNLKEIVLRSNLYGTCDASICVRGPGYVTAQDIILPPYVEVVDNTQHIASLTEPIELCIGLQIERNRGYLIKTPNNNSKDGSYPIDAVFMPVRNANHSIHSYGNGNDKQEILFLEIWTNGSLTPKEALHEASRNLIDLFIPFLHTEEENLHLANNQHMVPLPPFTFHDKLDKLRKNKKKRALKSIFIDQSELPPRIYNCLKRSNIYTLLDLLNNSQEDLMKIEHFRIKDVKQILGILEKNFSINLGKKPKMGFESLAQLIDSKSG.

An alpha N-terminal domain (alpha-NTD) region spans residues 1–234 (MVREKVTVST…DLFIPFLHTE (234 aa)). The tract at residues 267-353 (KRALKSIFID…LAQLIDSKSG (87 aa)) is alpha C-terminal domain (alpha-CTD).

The protein belongs to the RNA polymerase alpha chain family. In terms of assembly, in plastids the minimal PEP RNA polymerase catalytic core is composed of four subunits: alpha, beta, beta', and beta''. When a (nuclear-encoded) sigma factor is associated with the core the holoenzyme is formed, which can initiate transcription.

The protein localises to the plastid. It localises to the chloroplast. It catalyses the reaction RNA(n) + a ribonucleoside 5'-triphosphate = RNA(n+1) + diphosphate. DNA-dependent RNA polymerase catalyzes the transcription of DNA into RNA using the four ribonucleoside triphosphates as substrates. This Daucus carota (Wild carrot) protein is DNA-directed RNA polymerase subunit alpha.